Consider the following 241-residue polypeptide: Thiamine import ATP-binding protein ThiQ (241 aa).

Positions Ile7–Ile235 constitute an ABC transporter domain. Residue Gly37–Ser44 participates in ATP binding.

The protein belongs to the ABC transporter superfamily. Thiamine importer (TC 3.A.1.19.1) family. In terms of assembly, the complex is composed of two ATP-binding proteins (ThiQ), two transmembrane proteins (ThiP) and a solute-binding protein (ThiB).

Its subcellular location is the cell inner membrane. It catalyses the reaction thiamine(out) + ATP + H2O = thiamine(in) + ADP + phosphate + H(+). In terms of biological role, part of the ABC transporter complex ThiBPQ involved in thiamine import. Responsible for energy coupling to the transport system. In Brucella melitensis biotype 1 (strain ATCC 23456 / CCUG 17765 / NCTC 10094 / 16M), this protein is Thiamine import ATP-binding protein ThiQ.